The chain runs to 169 residues: Steroid receptor-associated and regulated protein (169 aa).

Interacts with 14-3-3 proteins. As to expression, expressed in breast tumors with a higher expression level in estrogen receptor-positive cancers.

Its function is as follows. May regulate the transcriptional function of androgen and estrogen receptors. In Homo sapiens (Human), this protein is Steroid receptor-associated and regulated protein.